Consider the following 108-residue polypeptide: UPF0060 membrane protein Rsph17029_0436 (108 aa).

4 helical membrane-spanning segments follow: residues L5–W25, A32–T52, A62–V82, and R86–P106.

The protein belongs to the UPF0060 family.

It is found in the cell inner membrane. The sequence is that of UPF0060 membrane protein Rsph17029_0436 from Cereibacter sphaeroides (strain ATCC 17029 / ATH 2.4.9) (Rhodobacter sphaeroides).